We begin with the raw amino-acid sequence, 967 residues long: Zinc finger protein with KRAB and SCAN domains 2 (967 aa).

Lys-22 participates in a covalent cross-link: Glycyl lysine isopeptide (Lys-Gly) (interchain with G-Cter in SUMO2). In terms of domain architecture, SCAN box spans 45-127 (RKCFRQFCYE…ALVVHLEKET (83 aa)). A disordered region spans residues 150 to 205 (WEVADFQPEQVETQPRAVSREEPGSLHSGHQEQLNRKRERRPLPKNARPSPWVPAL). Residues 167–185 (VSREEPGSLHSGHQEQLNR) are compositionally biased toward basic and acidic residues. Residues 229–300 (VKDVHVARGF…GLHSSNKRSI (72 aa)) form the KRAB domain. Glycyl lysine isopeptide (Lys-Gly) (interchain with G-Cter in SUMO2) cross-links involve residues Lys-242, Lys-259, Lys-277, Lys-337, Lys-482, and Lys-529. Residues 586 to 602 (RASAPSPSTPEEVPSPS) show a composition bias toward low complexity. The segment at 586-626 (RASAPSPSTPEEVPSPSRQERGGIEVEPQEPTGWEPEETSQ) is disordered. Phosphoserine occurs at positions 591 and 600. Glycyl lysine isopeptide (Lys-Gly) (interchain with G-Cter in SUMO2) cross-links involve residues Lys-734, Lys-745, and Lys-752. C2H2-type zinc fingers lie at residues 775–797 (YKCG…QRIH), 803–825 (FKCL…QRIH), 831–853 (YRCG…QRTH), 859–881 (YQCG…RRVH), 887–909 (YKCV…RRIH), and 915–937 (YGCA…REVH). The disordered stretch occupies residues 941 to 967 (KPLPHPPSLYCPENPHKGKTDEFRKTF). Basic and acidic residues predominate over residues 954–967 (NPHKGKTDEFRKTF).

This sequence belongs to the krueppel C2H2-type zinc-finger protein family.

Its subcellular location is the nucleus. Its function is as follows. May be involved in transcriptional regulation. This chain is Zinc finger protein with KRAB and SCAN domains 2 (ZKSCAN2), found in Homo sapiens (Human).